The chain runs to 230 residues: 2,3-bisphosphoglycerate-dependent phosphoglycerate mutase (230 aa).

Substrate-binding positions include 8–15 (RHGESEWN), 21–22 (TG), Arg-60, 87–90 (ERHY), Lys-98, 114–115 (RR), and 183–184 (GN). The active-site Tele-phosphohistidine intermediate is His-9. Catalysis depends on Glu-87, which acts as the Proton donor/acceptor.

This sequence belongs to the phosphoglycerate mutase family. BPG-dependent PGAM subfamily.

It carries out the reaction (2R)-2-phosphoglycerate = (2R)-3-phosphoglycerate. It participates in carbohydrate degradation; glycolysis; pyruvate from D-glyceraldehyde 3-phosphate: step 3/5. Its function is as follows. Catalyzes the interconversion of 2-phosphoglycerate and 3-phosphoglycerate. The polypeptide is 2,3-bisphosphoglycerate-dependent phosphoglycerate mutase (Streptococcus thermophilus (strain CNRZ 1066)).